The chain runs to 29 residues: MLYPLSYMLLWTDSIVEQYKKFYLFRFDL.

Its subcellular location is the plastid. The protein resides in the chloroplast. This is an uncharacterized protein from Trieres chinensis (Marine centric diatom).